Consider the following 364-residue polypeptide: Caffeic acid 3-O-methyltransferase 3 (364 aa).

129–135 is a substrate binding site; it reads MNQDKVL. The segment at 161–179 is substrate binding; sequence AFEYHGTDPRFNKVFNKGM. Positions 207, 230, 250, 251, and 264 each coordinate S-adenosyl-L-methionine. Residue H268 is the Proton acceptor of the active site.

It belongs to the class I-like SAM-binding methyltransferase superfamily. Cation-independent O-methyltransferase family. COMT subfamily. Homodimer.

It carries out the reaction (E)-caffeate + S-adenosyl-L-methionine = (E)-ferulate + S-adenosyl-L-homocysteine + H(+). It functions in the pathway aromatic compound metabolism; phenylpropanoid biosynthesis. Its function is as follows. Catalyzes the conversion of caffeic acid to ferulic acid and of 5-hydroxyferulic acid to sinapic acid. The resulting products may subsequently be converted to the corresponding alcohols that are incorporated into lignins. This Populus kitakamiensis (Aspen) protein is Caffeic acid 3-O-methyltransferase 3 (HOMT3).